Consider the following 122-residue polypeptide: uncharacterized protein (122 aa).

2 disordered regions span residues M1–E30 and F96–G122.

This is an uncharacterized protein from Homo sapiens (Human).